The sequence spans 395 residues: Phosphoglycerate kinase (395 aa).

Substrate is bound by residues 20-22, Arg36, 59-62, Arg120, and Arg157; these read DFN and HLGR. ATP is bound by residues Lys208, Gly296, Glu327, and 353-356; that span reads GGDT.

This sequence belongs to the phosphoglycerate kinase family. In terms of assembly, monomer.

The protein resides in the cytoplasm. The catalysed reaction is (2R)-3-phosphoglycerate + ATP = (2R)-3-phospho-glyceroyl phosphate + ADP. The protein operates within carbohydrate degradation; glycolysis; pyruvate from D-glyceraldehyde 3-phosphate: step 2/5. This is Phosphoglycerate kinase from Tropheryma whipplei (strain TW08/27) (Whipple's bacillus).